A 154-amino-acid chain; its full sequence is uncharacterized protein (154 aa).

Residue 12 to 19 (GSSDVGKT) participates in GTP binding. The G domain occupies 17–112 (GKTTLMENLI…KIPYGIFINK (96 aa)).

This sequence to M.thermoautotrophicum MTH765.

This is an uncharacterized protein from Methanocaldococcus jannaschii (strain ATCC 43067 / DSM 2661 / JAL-1 / JCM 10045 / NBRC 100440) (Methanococcus jannaschii).